The sequence spans 397 residues: Monooxygenase 1 (397 aa).

It belongs to the 3-hydroxybenzoate 6-hydroxylase family. In terms of assembly, monomer. FAD serves as cofactor. In terms of tissue distribution, expressed in seedlings, roots, leaves, flowers and siliques.

The sequence is that of Monooxygenase 1 from Arabidopsis thaliana (Mouse-ear cress).